The chain runs to 421 residues: D-inositol 3-phosphate glycosyltransferase (421 aa).

A 1D-myo-inositol 3-phosphate-binding site is contributed by H9. Residues 15–16 (QP) and G23 each bind UDP-N-acetyl-alpha-D-glucosamine. Residues 20–25 (DAGGMN), K78, Y110, T134, and R154 contribute to the 1D-myo-inositol 3-phosphate site. UDP-N-acetyl-alpha-D-glucosamine contacts are provided by R231, K236, and R294. The Mg(2+) site is built by Y303, Q304, and A306. Residues E316 and E324 each coordinate UDP-N-acetyl-alpha-D-glucosamine. T330 is a Mg(2+) binding site.

The protein belongs to the glycosyltransferase group 1 family. MshA subfamily. In terms of assembly, homodimer.

The enzyme catalyses 1D-myo-inositol 3-phosphate + UDP-N-acetyl-alpha-D-glucosamine = 1D-myo-inositol 2-acetamido-2-deoxy-alpha-D-glucopyranoside 3-phosphate + UDP + H(+). Functionally, catalyzes the transfer of a N-acetyl-glucosamine moiety to 1D-myo-inositol 3-phosphate to produce 1D-myo-inositol 2-acetamido-2-deoxy-glucopyranoside 3-phosphate in the mycothiol biosynthesis pathway. This is D-inositol 3-phosphate glycosyltransferase from Corynebacterium aurimucosum (strain ATCC 700975 / DSM 44827 / CIP 107346 / CN-1) (Corynebacterium nigricans).